Reading from the N-terminus, the 701-residue chain is Elongation factor G (701 aa).

The region spanning 8 to 290 (ERYRNIGISA…AVVDYLPAPT (283 aa)) is the tr-type G domain. Residues 17–24 (AHIDAGKT), 88–92 (DTPGH), and 142–145 (NKMD) each bind GTP.

The protein belongs to the TRAFAC class translation factor GTPase superfamily. Classic translation factor GTPase family. EF-G/EF-2 subfamily.

The protein localises to the cytoplasm. Catalyzes the GTP-dependent ribosomal translocation step during translation elongation. During this step, the ribosome changes from the pre-translocational (PRE) to the post-translocational (POST) state as the newly formed A-site-bound peptidyl-tRNA and P-site-bound deacylated tRNA move to the P and E sites, respectively. Catalyzes the coordinated movement of the two tRNA molecules, the mRNA and conformational changes in the ribosome. This is Elongation factor G from Aeromonas hydrophila subsp. hydrophila (strain ATCC 7966 / DSM 30187 / BCRC 13018 / CCUG 14551 / JCM 1027 / KCTC 2358 / NCIMB 9240 / NCTC 8049).